A 251-amino-acid chain; its full sequence is Diphthine synthase (251 aa).

Residues Leu9, Asp84, Val87, 112-113, Leu160, Ala194, and His219 contribute to the S-adenosyl-L-methionine site; that span reads SI.

This sequence belongs to the diphthine synthase family. As to quaternary structure, homodimer.

It catalyses the reaction 2-[(3S)-amino-3-carboxypropyl]-L-histidyl-[translation elongation factor 2] + 3 S-adenosyl-L-methionine = diphthine-[translation elongation factor 2] + 3 S-adenosyl-L-homocysteine + 3 H(+). The protein operates within protein modification; peptidyl-diphthamide biosynthesis. S-adenosyl-L-methionine-dependent methyltransferase that catalyzes the trimethylation of the amino group of the modified target histidine residue in translation elongation factor 2 (EF-2), to form an intermediate called diphthine. The three successive methylation reactions represent the second step of diphthamide biosynthesis. This Archaeoglobus fulgidus (strain ATCC 49558 / DSM 4304 / JCM 9628 / NBRC 100126 / VC-16) protein is Diphthine synthase.